Consider the following 141-residue polypeptide: Large-conductance mechanosensitive channel (141 aa).

The next 3 helical transmembrane spans lie at 16–36 (VIDLAVGVIIGAAFGKIVDSV), 40–60 (LIMPLVGRVIGKLDFSSMFIV), and 86–106 (GNFLTIVVNFLILAFIIFLMV).

Belongs to the MscL family. Homopentamer.

It is found in the cell inner membrane. Functionally, channel that opens in response to stretch forces in the membrane lipid bilayer. May participate in the regulation of osmotic pressure changes within the cell. In Cupriavidus necator (strain ATCC 17699 / DSM 428 / KCTC 22496 / NCIMB 10442 / H16 / Stanier 337) (Ralstonia eutropha), this protein is Large-conductance mechanosensitive channel.